An 828-amino-acid chain; its full sequence is Sarcolemmal membrane-associated protein (828 aa).

The tract at residues 1–163 is necessary for targeting to centrosomes; sequence MPSALAIFTC…AANTPSMYSQ (163 aa). The Cytoplasmic portion of the chain corresponds to 1-802; sequence MPSALAIFTC…REKGNNKPWP (802 aa). The 58-residue stretch at 28–85 folds into the FHA domain; the sequence is IKIGRSVARCRPAQNNATFDCKVLSRNHALVWFDHKTGKFYLQDTKSSNGTFINSQRL. Ser148 bears the Phosphoserine mark. Coiled-coil stretches lie at residues 167–202 and 230–388; these read QLSQ…ASDT and NQTE…QEKT. The helical; Anchor for type IV membrane protein transmembrane segment at 339–359 threads the bilayer; that stretch reads KKELQHKIDEMEEKEQELQAK. Positions 433–446 are enriched in basic and acidic residues; sequence KLSKENQTRAKESD. The segment at 433-467 is disordered; that stretch reads KLSKENQTRAKESDFSDTLSPSKEKSSDDTTDAQM. A phosphoserine mark is found at Ser448 and Ser452. A coiled-coil region spans residues 477–799; sequence AKVSLLKDDL…KLLREKGNNK (323 aa). The chain crosses the membrane as a helical; Anchor for type IV membrane protein span at residues 803 to 823; sequence WMPMLAALVAVTAIVLYVPGL. Residues 824–828 are Extracellular-facing; the sequence is ARASP.

This sequence belongs to the SLMAP family. In terms of assembly, homodimer. Interacts with myosin. Interacts with SIKE1 and both associate with the STRIPAK core complex composed of PP2A catalytic and scaffolding subunits, the striatins (PP2A regulatory subunits), the striatin-associated proteins MOB4, STRIP1 and STRIP2, PDCD10 and members of the STE20 kinases, such as STK24 and STK26. Interacts (via FHA domain) with STK3 (when phosphorylated); the interaction associates STK3 with the STRIPAK complex.

It localises to the cell membrane. It is found in the sarcolemma. The protein localises to the cytoplasm. The protein resides in the myofibril. Its subcellular location is the sarcomere. It localises to the m line. It is found in the z line. The protein localises to the cytoskeleton. The protein resides in the microtubule organizing center. Its subcellular location is the centrosome. It localises to the endoplasmic reticulum membrane. It is found in the mitochondrion membrane. Functionally, associates with the striatin-interacting phosphatase and kinase (STRIPAK) core complex, forming the extended (SIKE1:SLMAP)STRIPAK complex. The (SIKE1:SLMAP)STRIPAK complex dephosphorylates STK3 leading to the inhibition of Hippo signaling and the control of cell growth. May play a role during myoblast fusion. The sequence is that of Sarcolemmal membrane-associated protein from Homo sapiens (Human).